Reading from the N-terminus, the 147-residue chain is MGFTAQQEALVGSSYETFKKNLPTNSVLFYTVILEIAPTAKDMFSFLKESGPKHSPQLQAHAEKVFALTRDAATQLVAKGEVTLADASLGAVHVQKAVTDPHFVVVKEALLQTVKEAVGADEWSDDLSTAWEGAYDGLATAIKKAMG.

A Globin domain is found at 2–147 (GFTAQQEALV…LATAIKKAMG (146 aa)). Tyrosine 30 carries the post-translational modification Nitrated tyrosine. Serine 45 is a binding site for heme b. A Phosphoserine modification is found at serine 45. Histidine 61 contributes to the O2 binding site. Heme b contacts are provided by lysine 64, histidine 93, and lysine 96. Tyrosine 135 carries the post-translational modification Nitrated tyrosine.

The protein belongs to the plant globin family. Monomer. Post-translationally, nitrated in effective nodules and particularly in hypoxic conditions; this mechanism may play a protective role in the symbiosis by buffering toxic peroxynitrite NO(2)(-). Nitration level decrease during nodule senescence. Phosphorylation at Ser-45 disrupts the molecular environment of its porphyrin ring oxygen binding pocket, thus leading to a reduced oxygen consumption and to the delivery of oxygen O(2) to symbiosomes. In terms of tissue distribution, specifically and strongly expressed in root nodules and at low levels in seedlings.

It is found in the cytoplasm. The protein localises to the cytosol. Its subcellular location is the nucleus. In terms of biological role, leghemoglobin that reversibly binds oxygen O(2) through a pentacoordinated heme iron. In root nodules, facilitates the diffusion of oxygen to the bacteroids while preventing the bacterial nitrogenase from being inactivated by buffering dioxygen, nitric oxide and carbon monoxide, and promoting the formation of reactive oxygen species (ROS, e.g. H(2)O(2)). This role is essential for symbiotic nitrogen fixation (SNF). The polypeptide is Leghemoglobin 3 (Lotus japonicus (Lotus corniculatus var. japonicus)).